We begin with the raw amino-acid sequence, 118 residues long: V-type proton ATPase subunit G 1 (118 aa).

Position 2 is an N-acetylalanine (A2). The disordered stretch occupies residues 25-90 (ARKRKARRLK…VQGMQSSQQR (66 aa)). Residues 35 to 56 (QAKEEAQMEVEQYRREREHEFQ) show a composition bias toward basic and acidic residues. 2 stretches are compositionally biased toward polar residues: residues 57-69 (SKQQ…QGNL) and 78-89 (RHQVQGMQSSQQ).

This sequence belongs to the V-ATPase G subunit family. V-ATPase is a heteromultimeric enzyme made up of two complexes: the ATP-hydrolytic V1 complex and the proton translocation V0 complex. The V1 complex consists of three catalytic AB heterodimers that form a heterohexamer, three peripheral stalks each consisting of EG heterodimers, one central rotor including subunits D and F, and the regulatory subunits C and H. The proton translocation complex V0 consists of the proton transport subunit a, a ring of proteolipid subunits c9c'', rotary subunit d, subunits e and f, and the accessory subunits ATP6AP1/Ac45 and ATP6AP2/PRR.

It localises to the apical cell membrane. In terms of biological role, subunit of the V1 complex of vacuolar(H+)-ATPase (V-ATPase), a multisubunit enzyme composed of a peripheral complex (V1) that hydrolyzes ATP and a membrane integral complex (V0) that translocates protons. V-ATPase is responsible for acidifying and maintaining the pH of intracellular compartments and in some cell types, is targeted to the plasma membrane, where it is responsible for acidifying the extracellular environment. In aerobic conditions, involved in intracellular iron homeostasis, thus triggering the activity of Fe(2+) prolyl hydroxylase (PHD) enzymes, and leading to HIF1A hydroxylation and subsequent proteasomal degradation. This is V-type proton ATPase subunit G 1 (ATP6V1G1) from Pan troglodytes (Chimpanzee).